The sequence spans 270 residues: Transcription factor PU.1 (270 aa).

The interval 123–164 (SLSPAQPSSDEEEGERQSPPLEVSDGEADGLEPGPGLLPGET) is disordered. A phosphoserine mark is found at Ser140 and Ser146. Positions 153–164 (LEPGPGLLPGET) are enriched in low complexity. The ETS DNA-binding region spans 170-253 (IRLYQFLLDL…VKKKLTYQFS (84 aa)). Residues Lys217, Arg230, Arg233, and Lys243 each contribute to the DNA site.

Belongs to the ETS family. Binds DNA as a monomer. Can form homomers. Directly interacts with CEBPD/NF-IL6-beta; this interaction does not affect DNA-binding properties of each partner. Interacts with NONO/p54(nrb). Interacts with RUNX1/AML1. Interacts with GFI1; the interaction represses SPI1 transcriptional activity, hence blocks SPI1-induced macrophage differentiation of myeloid progenitor cells. Interacts with CEBPE. Interacts with IRF4/Pip and IRF8. Interacts with JUN. Interacts with RB1. Interacts with TBP. In terms of tissue distribution, in the bone marrow, concentrated in hematopoietic stem cell, lymphoid progenitor, myeloid lineage (granulocyte macrophage progenitors, classical dendritic cells, monocytes) and B-cell clusters. Among B-cells, predominantly expressed in pre-B1 cells. Expressed in germinal center B-cells.

Its subcellular location is the nucleus. Its activity is regulated as follows. Transcriptional activity at macrophage-specific genes is inhibited by interaction with GFI1, which results in the inhibition of SPI1-induced macrophage differentiation of myeloid progenitor cells, but not that of the granulocyte lineage. Pioneer transcription factor, which controls hematopoietic cell fate by decompacting stem cell heterochromatin and allowing other transcription factors to enter otherwise inaccessible genomic sites. Once in open chromatin, can directly control gene expression by binding genetic regulatory elements and can also more broadly influence transcription by recruiting transcription factors, such as interferon regulatory factors (IRFs), to otherwise inaccessible genomic regions. Transcriptionally activates genes important for myeloid and lymphoid lineages, such as CSF1R. Transcriptional activation from certain promoters, possibly containing low affinity binding sites, is achieved cooperatively with other transcription factors. FCER1A transactivation is achieved in cooperation with GATA1. May be particularly important for the pro- to pre-B cell transition. Binds (via the ETS domain) onto the purine-rich DNA core sequence 5'-GAGGAA-3', also known as the PU-box. In vitro can bind RNA and interfere with pre-mRNA splicing. This is Transcription factor PU.1 (SPI1) from Homo sapiens (Human).